The chain runs to 130 residues: Glycine cleavage system H protein (130 aa).

The region spanning 24-106 is the Lipoyl-binding domain; that stretch reads TFTVGITDHA…YGDGWLYRIT (83 aa). Lysine 65 bears the N6-lipoyllysine mark.

The protein belongs to the GcvH family. As to quaternary structure, the glycine cleavage system is composed of four proteins: P, T, L and H. (R)-lipoate is required as a cofactor.

Functionally, the glycine cleavage system catalyzes the degradation of glycine. The H protein shuttles the methylamine group of glycine from the P protein to the T protein. This chain is Glycine cleavage system H protein, found in Coxiella burnetii (strain CbuK_Q154) (Coxiella burnetii (strain Q154)).